Consider the following 259-residue polypeptide: Undecaprenyl-diphosphatase 4 (259 aa).

8 consecutive transmembrane segments (helical) span residues 1–21 (MNWL…FLPI), 39–59 (AGLF…FIYY), 71–91 (FSKL…IGLL), 99–119 (ISKT…FLYV), 133–153 (ITYK…FPAI), 173–193 (AAYF…ILQF), 208–228 (SLIV…SWMI), and 239–259 (FAYY…TDVF).

It belongs to the UppP family.

The protein resides in the cell membrane. It catalyses the reaction di-trans,octa-cis-undecaprenyl diphosphate + H2O = di-trans,octa-cis-undecaprenyl phosphate + phosphate + H(+). Its function is as follows. Catalyzes the dephosphorylation of undecaprenyl diphosphate (UPP). Confers resistance to bacitracin. The chain is Undecaprenyl-diphosphatase 4 from Bacillus thuringiensis subsp. konkukian (strain 97-27).